The chain runs to 84 residues: MKVTLIAIPTCAAVLVLHTTAAEELEESQLMEVGMPDTELAAVDEERLFECSVSCEIEKEGNKDCKKKKCKGGWKCKFNMCVKV.

The first 22 residues, 1–22, serve as a signal peptide directing secretion; the sequence is MKVTLIAIPTCAAVLVLHTTAA. A propeptide spanning residues 23 to 47 is cleaved from the precursor; that stretch reads EELEESQLMEVGMPDTELAAVDEER. Disulfide bonds link Cys-51/Cys-65, Cys-55/Cys-76, and Cys-70/Cys-81.

This sequence belongs to the neurotoxin 12 (Hwtx-2) family. 02 (Hwtx-2) subfamily. In terms of tissue distribution, expressed by the venom gland.

Its subcellular location is the secreted. Postsynaptic neurotoxin. This Cyriopagopus hainanus (Chinese bird spider) protein is U4-theraphotoxin-Hhn1a.